The following is a 323-amino-acid chain: Sphingolipid delta(4)-desaturase DES1 (323 aa).

The N-myristoyl glycine moiety is linked to residue Gly-2. The next 2 membrane-spanning stretches (helical) occupy residues 41–61 (SNLI…FYLV) and 68–88 (WVLF…TLAI). A Histidine box-1 motif is present at residues 89-93 (HEVSH). A helical membrane pass occupies residues 102–122 (AMWNRWFGIFANLPIGVPYSV). The Histidine box-2 motif lies at 128–132 (HMDHH). A run of 3 helical transmembrane segments spans residues 152–172 (FFCT…FYAF), 184–204 (YLEI…YYVL), and 209–229 (LVYM…SGHF). The Histidine box-3 motif lies at 259 to 263 (HNEHH). A Phosphoserine modification is found at Ser-307.

It belongs to the fatty acid desaturase type 1 family. DEGS subfamily. In terms of assembly, interacts with RLBP1; the interaction increases synthesis of chromophore-precursors by DEGS1. In terms of processing, myristoylation can target the enzyme to the mitochondria leading to an increase in ceramide levels.

Its subcellular location is the mitochondrion membrane. The protein resides in the endoplasmic reticulum membrane. The enzyme catalyses an N-acylsphinganine + 2 Fe(II)-[cytochrome b5] + O2 + 2 H(+) = an N-acylsphing-4-enine + 2 Fe(III)-[cytochrome b5] + 2 H2O. It carries out the reaction all-trans-retinol = 11-cis-retinol. It catalyses the reaction all-trans-retinol = 9-cis-retinol. The catalysed reaction is all-trans-retinol = 13-cis-retinol. The enzyme catalyses 11-cis-retinol = 13-cis-retinol. It carries out the reaction 11-cis-retinol = 9-cis-retinol. Functionally, has sphingolipid-delta-4-desaturase activity. Converts D-erythro-sphinganine to D-erythro-sphingosine (E-sphing-4-enine). Catalyzes the equilibrium isomerization of retinols. The polypeptide is Sphingolipid delta(4)-desaturase DES1 (DEGS1) (Bos taurus (Bovine)).